Here is a 507-residue protein sequence, read N- to C-terminus: uncharacterized protein (507 aa).

Low complexity predominate over residues 1–12 (MEKSISSISKAS). The interval 1–20 (MEKSISSISKASMNSDEKLD) is disordered. A run of 12 helical transmembrane segments spans residues 57–74 (FDFRILPLLALLYLFNAL), 100–120 (IMISIFYIPFVLCAFPFSYLY), 126–146 (ARILPFFMLSFGAMSLCQAAV), 157–177 (WFLGMAESAVLPGVVYYLTTF), 189–209 (IFYAAANVSSAFGGLLAYGVF), 221–241 (YLFLIEGGVTFLCAIVIFLVL), 283–303 (VFKHPIAILWLLEEMALGVPL), 326–346 (LMTVAPAISGAIWLLVFAFIS), 353–373 (GIVLIAAISTTMIGFIVYGSI), 379–399 (IGVSYFACFLMTAGAAASSVL), 416–436 (VFTSVGVPLANVMGLVSANIF), and 445–465 (VPALGITAGFGGLGILLVASI).

Belongs to the major facilitator superfamily. Allantoate permease family.

It is found in the endoplasmic reticulum. The protein localises to the membrane. This is an uncharacterized protein from Schizosaccharomyces pombe (strain 972 / ATCC 24843) (Fission yeast).